The primary structure comprises 363 residues: 3-isopropylmalate dehydrogenase (363 aa).

An NAD(+)-binding site is contributed by 78–91; sequence GPKWEHLPPAEQPE. The substrate site is built by Arg-99, Arg-109, Arg-138, and Asp-227. Mg(2+) is bound by residues Asp-227, Asp-251, and Asp-255. Position 285–297 (285–297) interacts with NAD(+); sequence GSAPDIAGKNIAN.

The protein belongs to the isocitrate and isopropylmalate dehydrogenases family. LeuB type 1 subfamily. As to quaternary structure, homodimer. It depends on Mg(2+) as a cofactor. The cofactor is Mn(2+).

The protein localises to the cytoplasm. The enzyme catalyses (2R,3S)-3-isopropylmalate + NAD(+) = 4-methyl-2-oxopentanoate + CO2 + NADH. It functions in the pathway amino-acid biosynthesis; L-leucine biosynthesis; L-leucine from 3-methyl-2-oxobutanoate: step 3/4. Catalyzes the oxidation of 3-carboxy-2-hydroxy-4-methylpentanoate (3-isopropylmalate) to 3-carboxy-4-methyl-2-oxopentanoate. The product decarboxylates to 4-methyl-2 oxopentanoate. The polypeptide is 3-isopropylmalate dehydrogenase (Yersinia pestis).